The primary structure comprises 250 residues: 23S rRNA (guanine(2535)-N(1))-methyltransferase (250 aa).

It catalyses the reaction guanosine(2535) in 23S rRNA + S-adenosyl-L-methionine = N(1)-methylguanosine(2535) in 23S rRNA + S-adenosyl-L-homocysteine + H(+). In terms of biological role, specifically methylates the guanine-2535 in 23S ribosomal RNA. Confers resistance to antibiotic avilamycin, an orthosomycin antibiotic. This is 23S rRNA (guanine(2535)-N(1))-methyltransferase (aviRa) from Streptomyces viridochromogenes.